An 854-amino-acid chain; its full sequence is MSILILLESPGKISKISSILGKNYVVKASMGHFRDLDPKKMSIDFDNDFEPVYIVTKPDVVKNLKSAMKNIDLVYLAADEDREGEAIAQSLYDVLKPSNYKRLRFNAITKDAIMSAIKNAGDIDKNLVDAQKARRVLDRLFGYLISPILQRQIGGKLSAGRVQSVTVRIIIDKENEIKNFINKNADSSYFKVSGTFNGAKATLHESNDKKPFDLETAYKGKTAQIALINSENPNSKVVNFMKRCLKSQFFIHSVEDKMTTRSPAPPFTTSTLQQEANRKFGMSIDSTMKTAQKLYEGGYITYMRTDSVEISAEGHRDIKKIITDQYGADYYQKNLYKNKAANSQEAHEAIRPTHPELLTLEGEIEDAYQIKLYKLIWQRTIASQMKPAKIKVTIIQISISKYVEDKLNPFYYFQSQIETVVFPGFMKVYVESIDDPDTDNQITKNFTGKIPTVGSKVTMEEIIARQEYMRPPPRYSEASLVKKLEELGIGRPSTYVNTIKTIINREYVKITDVPGIKKDITIYSIKSENKKHIMEVYEDTDTILLGKENKKIVPTNLGITVNDFLMKYFPEFLDYKFTANMETDLDYVSTGTKNWVDIVQDFYDKLKPIVDELSKQKGLSQSSERLLGEDNDGNEITATKTKFGPVVRKKIGDKYVYAKIKDPLTLDTIKLSDAIKLLEYPKNLGQYKGFDVLLQKGDYGFYLSYNKENFSLGEIDDPEDINLDTAIKAIEAKKANNIAEFNLTENGKKIKAIVLNGKYGYYVQVTRNRIKKNYPIPKDLDPNNLTEQQILSIISVKKTYKKSAPKGGSKTIRKPSQTKYSQTKSTKSTKSTKSTNKKFVGKSAKKTTKKTTKK.

Residues 2-110 (SILILLESPG…KRLRFNAITK (109 aa)) enclose the Toprim domain. Mg(2+)-binding residues include Glu8 and Asp79. The Topo IA-type catalytic domain occupies 124-610 (DKNLVDAQKA…DFYDKLKPIV (487 aa)). Positions 158–163 (SAGRVQ) are interaction with DNA. Tyr302 serves as the catalytic O-(5'-phospho-DNA)-tyrosine intermediate. Residues 802–854 (KSAPKGGSKTIRKPSQTKYSQTKSTKSTKSTKSTNKKFVGKSAKKTTKKTTKK) form a disordered region. The segment covering 814–834 (KPSQTKYSQTKSTKSTKSTKS) has biased composition (low complexity). A compositionally biased stretch (basic residues) spans 835-854 (TNKKFVGKSAKKTTKKTTKK).

It belongs to the type IA topoisomerase family. Mg(2+) is required as a cofactor.

It localises to the virion. The enzyme catalyses ATP-independent breakage of single-stranded DNA, followed by passage and rejoining.. Its function is as follows. Releases the supercoiling and torsional tension of DNA, which is introduced during the DNA replication and transcription, by transiently cleaving and rejoining one strand of the DNA duplex. Introduces a single-strand break via transesterification at a target site in duplex DNA. The scissile phosphodiester is attacked by the catalytic tyrosine of the enzyme, resulting in the formation of a DNA-(5'-phosphotyrosyl)-enzyme intermediate and the expulsion of a 3'-OH DNA strand. The free DNA strand then undergoes passage around the unbroken strand, thus removing DNA supercoils. Finally, in the religation step, the DNA 3'-OH attacks the covalent intermediate to expel the active-site tyrosine and restore the DNA phosphodiester backbone. The chain is DNA topoisomerase 1 type prokaryotic (TOP1P) from Acanthamoeba polyphaga (Amoeba).